The primary structure comprises 164 residues: MSTQLASNIYAPLYAPFFGFAGCAAAMVLSCLGAAIGTAKSGIGIAGIGTFKPELIMKSLIPVVMSGILAIYGLVVAVLIAGNLSPTEDYTLFNGFMHLSCGLCVGFACLSSGYAIGMVGDVGVRKYMHQPRLFVGIVLILIFSEVLGLYGMIVALILNTRGSE.

Residues 1–14 lie on the Vacuolar side of the membrane; it reads MSTQLASNIYAPLY. A helical membrane pass occupies residues 15-37; it reads APFFGFAGCAAAMVLSCLGAAIG. Over 38 to 59 the chain is Cytoplasmic; it reads TAKSGIGIAGIGTFKPELIMKS. A helical transmembrane segment spans residues 60-80; it reads LIPVVMSGILAIYGLVVAVLI. At 81-98 the chain is on the vacuolar side; sequence AGNLSPTEDYTLFNGFMH. A helical membrane pass occupies residues 99 to 120; sequence LSCGLCVGFACLSSGYAIGMVG. Over 121 to 132 the chain is Cytoplasmic; it reads DVGVRKYMHQPR. Residues 133-158 traverse the membrane as a helical segment; it reads LFVGIVLILIFSEVLGLYGMIVALIL. The Vacuolar portion of the chain corresponds to 159-164; it reads NTRGSE.

It belongs to the V-ATPase proteolipid subunit family. V-ATPase is a heteromultimeric enzyme composed of a peripheral catalytic V1 complex (components A to H) attached to an integral membrane V0 proton pore complex (components: a, c, c', c'', d, e, f and VOA1). The decameric c-ring forms the proton-conducting pore, and is composed of eight proteolipid subunits c, one subunit c' and one subunit c''.

It is found in the vacuole membrane. In terms of biological role, proton-conducting pore forming subunit of the V0 complex of vacuolar(H+)-ATPase (V-ATPase), a multisubunit enzyme composed of a peripheral complex (V1) that hydrolyzes ATP and a membrane integral complex (V0) that translocates protons. V-ATPase is responsible for acidifying and maintaining the pH of intracellular compartments. This is V-type proton ATPase subunit c' (VMA11) from Saccharomyces cerevisiae (strain ATCC 204508 / S288c) (Baker's yeast).